Here is a 428-residue protein sequence, read N- to C-terminus: Cholesterol 7-desaturase (428 aa).

Residues 6–26 (IWGFLTAHPISVVTTILIVYL) form a helical membrane-spanning segment. The region spanning 81-187 (WYCVCESEKL…CIERNNNIYL (107 aa)) is the Rieske domain. Residues C122, H124, C143, and H146 each coordinate [2Fe-2S] cluster.

Belongs to the cholesterol 7-desaturase family. Requires [2Fe-2S] cluster as cofactor. In terms of tissue distribution, expressed in intestine at all postembryonic stages, including dauer. Expression is reduced in daf-2 mutants.

It is found in the membrane. It catalyses the reaction cholesterol + NADPH + O2 + H(+) = 7-dehydrocholesterol + NADP(+) + 2 H2O. It carries out the reaction cholesterol + NADH + O2 + H(+) = 7-dehydrocholesterol + NAD(+) + 2 H2O. It participates in steroid hormone biosynthesis; dafachronic acid biosynthesis. Catalyzes the production of 7-dehydrocholesterol (7-DHC or cholesta-5,7-dien-3beta-ol) by inserting a double bond (desaturating) at the C7-C8 single bond of cholesterol. This reaction is the first step in the synthesis of the steroid hormone Delta(7)-dafachronic acid (one of the principal steroid hormones in nematodes). Dafachronic acids bind directly to the nuclear hormone receptor (NHR) daf-12, suppressing dauer formation and inducing reproductive growth. This is Cholesterol 7-desaturase (daf-36) from Caenorhabditis elegans.